The following is a 225-amino-acid chain: Phosphatidylserine decarboxylase proenzyme (225 aa).

S195 serves as the catalytic Schiff-base intermediate with substrate; via pyruvic acid. S195 carries the pyruvic acid (Ser); by autocatalysis modification.

This sequence belongs to the phosphatidylserine decarboxylase family. PSD-A subfamily. As to quaternary structure, heterodimer of a large membrane-associated beta subunit and a small pyruvoyl-containing alpha subunit. Pyruvate serves as cofactor. In terms of processing, is synthesized initially as an inactive proenzyme. Formation of the active enzyme involves a self-maturation process in which the active site pyruvoyl group is generated from an internal serine residue via an autocatalytic post-translational modification. Two non-identical subunits are generated from the proenzyme in this reaction, and the pyruvate is formed at the N-terminus of the alpha chain, which is derived from the carboxyl end of the proenzyme. The post-translation cleavage follows an unusual pathway, termed non-hydrolytic serinolysis, in which the side chain hydroxyl group of the serine supplies its oxygen atom to form the C-terminus of the beta chain, while the remainder of the serine residue undergoes an oxidative deamination to produce ammonia and the pyruvoyl prosthetic group on the alpha chain.

Its subcellular location is the cell membrane. It catalyses the reaction a 1,2-diacyl-sn-glycero-3-phospho-L-serine + H(+) = a 1,2-diacyl-sn-glycero-3-phosphoethanolamine + CO2. The protein operates within phospholipid metabolism; phosphatidylethanolamine biosynthesis; phosphatidylethanolamine from CDP-diacylglycerol: step 2/2. Its function is as follows. Catalyzes the formation of phosphatidylethanolamine (PtdEtn) from phosphatidylserine (PtdSer). In Gluconacetobacter diazotrophicus (strain ATCC 49037 / DSM 5601 / CCUG 37298 / CIP 103539 / LMG 7603 / PAl5), this protein is Phosphatidylserine decarboxylase proenzyme.